The chain runs to 453 residues: GTPase Der (453 aa).

EngA-type G domains follow at residues 4-169 (PIVA…SETP) and 177-352 (IKVA…RQFE). Residues 10 to 17 (GRPNVGKS), 57 to 61 (DTGGL), 120 to 123 (NKCE), 183 to 190 (GRPNVGKS), 230 to 234 (DTAGI), and 295 to 298 (NKWD) each bind GTP. In terms of domain architecture, KH-like spans 353-438 (QRVTTSVINE…PIRLLWRGKK (86 aa)).

Belongs to the TRAFAC class TrmE-Era-EngA-EngB-Septin-like GTPase superfamily. EngA (Der) GTPase family. Associates with the 50S ribosomal subunit.

GTPase that plays an essential role in the late steps of ribosome biogenesis. The polypeptide is GTPase Der (Acaryochloris marina (strain MBIC 11017)).